The following is a 330-amino-acid chain: Protein qutG (330 aa).

5 residues coordinate Mg(2+): E78, D100, L102, D103, and D251. E78 provides a ligand contact to substrate. Substrate contacts are provided by residues 102-105 and D251; that span reads LDGT.

It belongs to the inositol monophosphatase superfamily.

Its function is as follows. Not known. Probably involved in quinate metabolism. In Emericella nidulans (strain FGSC A4 / ATCC 38163 / CBS 112.46 / NRRL 194 / M139) (Aspergillus nidulans), this protein is Protein qutG (qutG).